We begin with the raw amino-acid sequence, 620 residues long: Sodium-dependent dopamine transporter (620 aa).

At 1–56 (MSKSKCSVGLMSSVVAPAKEPNAMGPKEVELILVKEQNGVQLTSSTLTNPRQSPVE) the chain is on the cytoplasmic side. A discontinuously helical membrane pass occupies residues 57–95 (AQDRETWGKKIDFLLSVIGFAVDLANVWRFPYLCYKNGG). Gly75, Ala77, Val78, Asp79, and Asn82 together coordinate Na(+). Asp79 contacts dopamine. The next 2 membrane-spanning stretches (helical) occupy residues 96 to 127 (GAFLVPYLLFMVIAGMPLFYMELALGQFNREG) and 128 to 171 (AAGV…FSSF). Dopamine-binding residues include Ser149 and Gly153. Over 172-236 (TTELPWIHCN…SHGIDDLGPP (65 aa)) the chain is Extracellular. An intrachain disulfide couples Cys180 to Cys189. N-linked (GlcNAc...) asparagine glycosylation is found at Asn181, Asn188, and Asn205. Transmembrane regions (helical) follow at residues 237-256 (RWQLTACLVLVIVLLYFSLW) and 257-287 (KGVKTSGKVVWITATMPYVVLTALLLRGVTL). Over 288 to 306 (PGAIDGIRAYLSVDFYRLC) the chain is Extracellular. Residues 307-335 (EASVWIDAATQVCFSLGVGFGVLIAFSSY) form a discontinuously helical membrane-spanning segment. Residue Gln317 participates in chloride binding. Phe320 lines the dopamine pocket. Positions 321 and 353 each coordinate Na(+). Ser321 is a chloride binding site. The helical transmembrane segment at 336–376 (NKFTNNCYRDAIVTTSINSLTSFSSGFVVFSFLGYMAQKHS) threads the bilayer. Ser357 provides a ligand contact to chloride. The Extracellular portion of the chain corresponds to 377 to 400 (VPIGDVAKDGPGLIFIIYPEAIAT). The next 3 membrane-spanning stretches (helical) occupy residues 401–442 (LPLS…QLLH), 443–466 (RHRELFTLFIVLATFLLSLFCVTN), and 467–499 (GGIYVFTLLDHFAAGTSILFGVLIEAIGVAWFY). Na(+) contacts are provided by Leu418, Asp421, and Ser422. Dopamine contacts are provided by Ser422 and Ala423. The Cytoplasmic segment spans residues 500–516 (GVGQFSDDIQQMTGQRP). A helical transmembrane segment spans residues 517-542 (SLYWRLCWKLVSPCFLLFVVVVSIVT). The Extracellular portion of the chain corresponds to 543 to 553 (FRPPHYGAYIF). The chain crosses the membrane as a helical span at residues 554–583 (PDWANALGWVIATSSMAMVPIYAAYKFCSL). Positions 561–590 (GWVIATSSMAMVPIYAAYKFCSLPGSFREK) are interaction with TGFB1I1. Residues 584–620 (PGSFREKLAYAIAPEKDRELVDRGEVRQFTLRHWLKV) are Cytoplasmic-facing.

Belongs to the sodium:neurotransmitter symporter (SNF) (TC 2.A.22) family. SLC6A3 subfamily. Monomer. Homooligomer; disulfide-linked. Interacts with PRKCABP and TGFB1I1. Interacts (via N-terminus) with SYNGR3 (via N-terminus). Interacts with SLC18A2. Interacts with TOR1A (ATP-bound); TOR1A regulates SLC6A3 subcellular location. Interacts with alpha-synuclein/SNCA. Interacts with SEPTIN4.

It is found in the cell membrane. Its subcellular location is the cell projection. The protein resides in the neuron projection. The protein localises to the axon. The catalysed reaction is dopamine(out) + chloride(out) + Na(+)(out) = dopamine(in) + chloride(in) + Na(+)(in). The enzyme catalyses (R)-noradrenaline(out) + chloride(out) + Na(+)(out) = (R)-noradrenaline(in) + chloride(in) + Na(+)(in). It carries out the reaction dopamine(out) + chloride(out) + 2 Na(+)(out) = dopamine(in) + chloride(in) + 2 Na(+)(in). Its activity is regulated as follows. Inhibited by zinc ions. Functionally, mediates sodium- and chloride-dependent transport of dopamine. Also mediates sodium- and chloride-dependent transport of norepinephrine (also known as noradrenaline). Regulator of light-dependent retinal hyaloid vessel regression, downstream of OPN5 signaling. This chain is Sodium-dependent dopamine transporter (SLC6A3), found in Macaca fascicularis (Crab-eating macaque).